A 286-amino-acid polypeptide reads, in one-letter code: Polyamine aminopropyltransferase (286 aa).

The region spanning 5-238 (KTWHEKLYCH…GVMVFAWGTN (234 aa)) is the PABS domain. His64 and Asp88 together coordinate spermidine. S-methyl-5'-thioadenosine is bound by residues Glu108 and 140-141 (DG). Asp158 (proton acceptor) is an active-site residue. Spermidine is bound at residue 158-161 (DSTD).

The protein belongs to the spermidine/spermine synthase family. Homodimer or homotetramer.

It is found in the cytoplasm. It catalyses the reaction S-adenosyl 3-(methylsulfanyl)propylamine + putrescine = S-methyl-5'-thioadenosine + spermidine + H(+). It functions in the pathway amine and polyamine biosynthesis; spermidine biosynthesis; spermidine from putrescine: step 1/1. Functionally, catalyzes the irreversible transfer of a propylamine group from the amino donor S-adenosylmethioninamine (decarboxy-AdoMet) to putrescine (1,4-diaminobutane) to yield spermidine. In Buchnera aphidicola subsp. Acyrthosiphon pisum (strain 5A), this protein is Polyamine aminopropyltransferase.